Here is a 359-residue protein sequence, read N- to C-terminus: 4-hydroxyproline 2-epimerase (359 aa).

Cys126 serves as the catalytic Proton acceptor. Residues 127–128 (GH), His248, and Asp274 contribute to the substrate site. Cys278 functions as the Proton donor in the catalytic mechanism. 279–280 (GT) lines the substrate pocket.

Belongs to the proline racemase family.

It catalyses the reaction trans-4-hydroxy-L-proline = cis-4-hydroxy-D-proline. Functionally, catalyzes the epimerization of trans-4-hydroxy-L-proline (t4LHyp) to cis-4-hydroxy-D-proline (c4DHyp). Is likely involved in a degradation pathway that converts t4LHyp to alpha-ketoglutarate. Displays no proline racemase activity. The polypeptide is 4-hydroxyproline 2-epimerase (Planctopirus limnophila (strain ATCC 43296 / DSM 3776 / IFAM 1008 / Mu 290) (Planctomyces limnophilus)).